The chain runs to 341 residues: Methionine import ATP-binding protein MetN 3 (341 aa).

The region spanning 2–241 (ILLENVKKIY…PQQDITKRFV (240 aa)) is the ABC transporter domain. 38-45 (GYSGAGKS) contacts ATP.

It belongs to the ABC transporter superfamily. Methionine importer (TC 3.A.1.24) family. As to quaternary structure, the complex is composed of two ATP-binding proteins (MetN), two transmembrane proteins (MetI) and a solute-binding protein (MetQ).

The protein resides in the cell membrane. It carries out the reaction L-methionine(out) + ATP + H2O = L-methionine(in) + ADP + phosphate + H(+). The enzyme catalyses D-methionine(out) + ATP + H2O = D-methionine(in) + ADP + phosphate + H(+). Part of the ABC transporter complex MetNIQ involved in methionine import. Responsible for energy coupling to the transport system. In Bacillus cereus (strain ZK / E33L), this protein is Methionine import ATP-binding protein MetN 3.